A 208-amino-acid polypeptide reads, in one-letter code: N-(5'-phosphoribosyl)anthranilate isomerase (208 aa).

The protein belongs to the TrpF family.

The catalysed reaction is N-(5-phospho-beta-D-ribosyl)anthranilate = 1-(2-carboxyphenylamino)-1-deoxy-D-ribulose 5-phosphate. It functions in the pathway amino-acid biosynthesis; L-tryptophan biosynthesis; L-tryptophan from chorismate: step 3/5. This is N-(5'-phosphoribosyl)anthranilate isomerase from Neisseria meningitidis serogroup C / serotype 2a (strain ATCC 700532 / DSM 15464 / FAM18).